The following is a 74-amino-acid chain: Putative membrane protein insertion efficiency factor (74 aa).

It belongs to the UPF0161 family.

It localises to the cell inner membrane. Its function is as follows. Could be involved in insertion of integral membrane proteins into the membrane. The chain is Putative membrane protein insertion efficiency factor from Blochmanniella floridana.